A 479-amino-acid polypeptide reads, in one-letter code: Cell division protein FtsA (479 aa).

The disordered stretch occupies residues 417–458; it reads QGRQTERKENEQRDNTDRQREDTPKQTVKKKEKTGPSFGDKL. Over residues 420 to 440 the composition is skewed to basic and acidic residues; that stretch reads QTERKENEQRDNTDRQREDTP.

This sequence belongs to the FtsA/MreB family. As to quaternary structure, self-interacts. Interacts with FtsZ.

It is found in the cell inner membrane. Its function is as follows. Cell division protein that is involved in the assembly of the Z ring. May serve as a membrane anchor for the Z ring. The sequence is that of Cell division protein FtsA from Porphyromonas gingivalis (strain ATCC BAA-308 / W83).